Reading from the N-terminus, the 288-residue chain is Cell division protein ZipA (288 aa).

Residue M1 is a topological domain, periplasmic. A helical membrane pass occupies residues 2-22 (EIGLREWLIVIGIIVIAGILF). The Cytoplasmic segment spans residues 23–288 (DGWRRMRGGK…ERRALTQRRG (266 aa)). The tract at residues 48–138 (DEEETTSAEV…DDKPAQRITE (91 aa)) is disordered. 3 stretches are compositionally biased toward basic and acidic residues: residues 64 to 77 (LDTHKEPQLDEHDL), 85 to 105 (RDNKRGAGSEKRGDKKRKDEP), and 122 to 138 (ARDDDFPDDKPAQRITE).

It belongs to the ZipA family. Interacts with FtsZ via their C-terminal domains.

Its subcellular location is the cell inner membrane. Functionally, essential cell division protein that stabilizes the FtsZ protofilaments by cross-linking them and that serves as a cytoplasmic membrane anchor for the Z ring. Also required for the recruitment to the septal ring of downstream cell division proteins. The sequence is that of Cell division protein ZipA from Pseudomonas syringae pv. tomato (strain ATCC BAA-871 / DC3000).